Reading from the N-terminus, the 276-residue chain is NH(3)-dependent NAD(+) synthetase (276 aa).

43–50 (GISGGVDS) contributes to the ATP binding site. D49 contributes to the Mg(2+) binding site. R146 is a deamido-NAD(+) binding site. Residue T166 coordinates ATP. Residue E171 coordinates Mg(2+). 2 residues coordinate deamido-NAD(+): K179 and D186. 2 residues coordinate ATP: K195 and T217. 266–267 (HK) is a deamido-NAD(+) binding site.

It belongs to the NAD synthetase family. As to quaternary structure, homodimer.

It catalyses the reaction deamido-NAD(+) + NH4(+) + ATP = AMP + diphosphate + NAD(+) + H(+). Its pathway is cofactor biosynthesis; NAD(+) biosynthesis; NAD(+) from deamido-NAD(+) (ammonia route): step 1/1. Its function is as follows. Catalyzes the ATP-dependent amidation of deamido-NAD to form NAD. Uses ammonia as a nitrogen source. This chain is NH(3)-dependent NAD(+) synthetase, found in Shewanella halifaxensis (strain HAW-EB4).